The following is a 777-amino-acid chain: E3 UFM1-protein ligase 1 homolog (777 aa).

Over residues 396–417 the composition is skewed to basic and acidic residues; it reads MKHQDPMDRDSAVGEGKADKRE. The interval 396-470 is disordered; that stretch reads MKHQDPMDRD…PSGGKKGGKD (75 aa).

This sequence belongs to the UFL1 family.

Functionally, E3 UFM1-protein ligase that mediates ufmylation of target proteins. This is E3 UFM1-protein ligase 1 homolog from Aedes aegypti (Yellowfever mosquito).